Consider the following 601-residue polypeptide: DNA ligase (601 aa).

ATP is bound at residue Asp258. The active-site N6-AMP-lysine intermediate is Lys260. Arg265, Arg280, Glu310, Phe350, Arg427, and Lys433 together coordinate ATP.

It belongs to the ATP-dependent DNA ligase family. It depends on Mg(2+) as a cofactor. Ca(2+) serves as cofactor. The cofactor is Mn(2+).

It carries out the reaction ATP + (deoxyribonucleotide)n-3'-hydroxyl + 5'-phospho-(deoxyribonucleotide)m = (deoxyribonucleotide)n+m + AMP + diphosphate.. Its function is as follows. DNA ligase that seals nicks in double-stranded DNA during DNA replication, DNA recombination and DNA repair. Also has low activity with dATP. Inactive with NAD(+), CTP, GTP, UTP, dCTP, dGTP or dTTP. The protein is DNA ligase of Saccharolobus shibatae (strain ATCC 51178 / DSM 5389 / JCM 8931 / NBRC 15437 / B12) (Sulfolobus shibatae).